Consider the following 560-residue polypeptide: Solute carrier family 49 member A3 (560 aa).

A run of 12 helical transmembrane segments spans residues 30–50, 70–90, 100–120, 125–145, 166–186, 192–212, 250–270, 282–302, 318–338, 341–361, 379–399, and 422–442; these read WVFLLAISLLNCSNATLWLSF, WLSLVYLVVSTPFGVAAIWIL, ILGAWLNFAGSVLRMVPCMVV, PFAFLMGGQSLCALAQSLVIF, LATMSNPLGVLVANVLSPVLV, IPLMLGVYTIPAGVVCLLSTI, VILAVCLGGMIGISASFSALL, GFSGLCGALFITFGILGALAL, IGLCLFSLACVPFALVSQLQG, LALAATCSLLGLFGFSVGPVA, GMIFVLGQAEGILIMLAMTAL, and VSLLLMAGLCTFFSCILAVFF. Positions 451–540 are disordered; it reads AESGEPPSTR…PGRLAGRVQA (90 aa). The segment covering 466-481 has biased composition (gly residues); that stretch reads ADSGPGVDRGGAGRAG.

Belongs to the major facilitator superfamily.

It localises to the membrane. The chain is Solute carrier family 49 member A3 from Homo sapiens (Human).